Here is a 134-residue protein sequence, read N- to C-terminus: MPARPASSTTRQGALAEDRALAYLQRQGLVAVERNYRCKGGEIDLIMRAADDTLVFVEVRKRGGRGFGGAAASITLTKQRRVLRAASHYLATLDRLPPCRVDVVALDPGRLEWLRNAFDLGALDSEGGGEGPAS.

It belongs to the UPF0102 family.

The sequence is that of UPF0102 protein Rmet_3430 from Cupriavidus metallidurans (strain ATCC 43123 / DSM 2839 / NBRC 102507 / CH34) (Ralstonia metallidurans).